A 194-amino-acid polypeptide reads, in one-letter code: Ion-translocating oxidoreductase complex subunit A (194 aa).

6 helical membrane-spanning segments follow: residues 5–25 (VLIL…FLGL), 47–67 (FVLT…LVPF), 72–92 (LRTI…EMFV), 102–122 (VLGV…VALL), 135–155 (LTYG…FAAM), and 172–192 (SIGL…SGLI).

Belongs to the NqrDE/RnfAE family. In terms of assembly, the complex is composed of six subunits: RnfA, RnfB, RnfC, RnfD, RnfE and RnfG.

It is found in the cell inner membrane. Part of a membrane-bound complex that couples electron transfer with translocation of ions across the membrane. In Alcanivorax borkumensis (strain ATCC 700651 / DSM 11573 / NCIMB 13689 / SK2), this protein is Ion-translocating oxidoreductase complex subunit A.